A 543-amino-acid chain; its full sequence is Zinc finger CCHC domain-containing protein 7 (543 aa).

Positions 51 to 71 (EEEHEEKNSGNSESSSSKPNQ) are disordered. Positions 59-68 (SGNSESSSSK) are enriched in low complexity. Glycyl lysine isopeptide (Lys-Gly) (interchain with G-Cter in SUMO2) cross-links involve residues Lys-131, Lys-139, Lys-141, Lys-239, and Lys-254. 3 consecutive CCHC-type zinc fingers follow at residues 241–258 (IICRNCDKRGHLSKNCPL), 263–280 (RRCFLCSRRGHLLYSCPA), and 304–321 (KQCDRCHMLGHYTDACTE). Lys-339 participates in a covalent cross-link: Glycyl lysine isopeptide (Lys-Gly) (interchain with G-Cter in SUMO2). Residues 348-365 (AYCYHCAQKGHYGHECPE) form a CCHC-type 4 zinc finger. Residues Lys-412, Lys-417, and Lys-435 each participate in a glycyl lysine isopeptide (Lys-Gly) (interchain with G-Cter in SUMO2) cross-link. The tract at residues 414 to 543 (PYIKAANENP…FLIKQRKKKS (130 aa)) is disordered. Basic and acidic residues-rich tracts occupy residues 441–457 (QENKETQKEMKNKNRNW) and 465–475 (RHREVDEDFPR). Lys-478 participates in a covalent cross-link: Glycyl lysine isopeptide (Lys-Gly) (interchain with G-Cter in SUMO2). Polar residues predominate over residues 479–491 (TYSSPGSFKTQKP). Ser-482 and Ser-485 each carry phosphoserine. Glycyl lysine isopeptide (Lys-Gly) (interchain with G-Cter in SUMO2) cross-links involve residues Lys-487, Lys-490, and Lys-493. Residues 493-502 (KPFHRSSHYH) show a composition bias toward basic residues. Residues 503–515 (TSREDKSPKEGKR) are compositionally biased toward basic and acidic residues. Lys-537 is covalently cross-linked (Glycyl lysine isopeptide (Lys-Gly) (interchain with G-Cter in SUMO2)).

As to quaternary structure, component of a nucleolar TRAMP-like complex, an ATP-dependent exosome regulatory complex consisting of a helicase (MTREX), an oligadenylate polymerase (TENT4B or TENT4A), and a substrate specific RNA-binding factor (ZCCHC7 or ZCCHC8). Several TRAMP-like complexes exist with specific compositions and are associated with nuclear, or nucleolar RNA exosomes.

It is found in the nucleus. The protein resides in the nucleolus. The chain is Zinc finger CCHC domain-containing protein 7 (ZCCHC7) from Homo sapiens (Human).